A 383-amino-acid chain; its full sequence is Lipid-A-disaccharide synthase (383 aa).

This sequence belongs to the LpxB family.

It carries out the reaction a lipid X + a UDP-2-N,3-O-bis[(3R)-3-hydroxyacyl]-alpha-D-glucosamine = a lipid A disaccharide + UDP + H(+). The protein operates within bacterial outer membrane biogenesis; LPS lipid A biosynthesis. Condensation of UDP-2,3-diacylglucosamine and 2,3-diacylglucosamine-1-phosphate to form lipid A disaccharide, a precursor of lipid A, a phosphorylated glycolipid that anchors the lipopolysaccharide to the outer membrane of the cell. The sequence is that of Lipid-A-disaccharide synthase from Anaeromyxobacter dehalogenans (strain 2CP-1 / ATCC BAA-258).